Consider the following 1749-residue polypeptide: Transposon Ty1-NL2 Gag-Pol polyprotein (1749 aa).

Polar residues-rich tracts occupy residues 1 to 23 (MESQQLSQHSPISHGSACASVTS), 48 to 60 (TKANSQQTTTPAS), 71 to 97 (SPQTAQSHSPQNGPYPQQCMMTQNQAN), and 129 to 152 (QFPQYPSSVGTPLSTPSPESGNTF). Disordered regions lie at residues 1-97 (MESQ…NQAN), 129-171 (QFPQ…YVRP), and 352-421 (GSRN…SKST). Positions 153-165 (TDSSSADSDMTST) are enriched in low complexity. Residues 299-401 (NNGIHINNKV…NSKSKTARAH (103 aa)) are RNA-binding. Positions 402 to 418 (NVSTSNNSPSTDNDSIS) are enriched in low complexity. Asp461 acts as the For protease activity; shared with dimeric partner in catalysis. Positions 583 to 640 (NVHTSESTRKYPYPFIHRMLAHANAQTIRYSLKNNTITYFNESDVDWSSAIDYQCPDC) are integrase-type zinc finger-like. In terms of domain architecture, Integrase catalytic spans 660 to 835 (NSYEPFQYLH…AGLDISTLLP (176 aa)). Mg(2+)-binding residues include Asp671 and Asp736. Residues 945–1166 (PRNVLSKAVS…LGGIGDSNAY (222 aa)) form a disordered region. Over residues 954–963 (SPTDSTPPST) the composition is skewed to low complexity. Polar residues predominate over residues 999 to 1009 (STPQISDIEST). A compositionally biased stretch (basic and acidic residues) spans 1032–1047 (ESSHTSKSKDFRHSDS). Polar residues-rich tracts occupy residues 1048 to 1076 (YSDNETNHTNVPISSTGGTNNKTVPQTSE) and 1089 to 1100 (SIDTSSSESNSL). The Bipartite nuclear localization signal signature appears at 1172–1206 (KKRSLEDNETEIKVSRDTWNTKNMRSLEPPRSKKR). Positions 1332–1470 (NNYYITQLDI…DILGLEIKYQ (139 aa)) constitute a Reverse transcriptase Ty1/copia-type domain. Residues Asp1340, Asp1421, Asp1422, Asp1604, Glu1646, and Asp1679 each coordinate Mg(2+). The region spanning 1604-1746 (DASYGNQPYY…IKTFKLLTNK (143 aa)) is the RNase H Ty1/copia-type domain.

As to quaternary structure, the capsid protein forms a homotrimer, from which the VLPs are assembled. The protease is a homodimer, whose active site consists of two apposed aspartic acid residues. Post-translationally, initially, virus-like particles (VLPs) are composed of the structural unprocessed proteins Gag and Gag-Pol, and also contain the host initiator methionine tRNA (tRNA(i)-Met) which serves as a primer for minus-strand DNA synthesis, and a dimer of genomic Ty RNA. Processing of the polyproteins occurs within the particle and proceeds by an ordered pathway, called maturation. First, the protease (PR) is released by autocatalytic cleavage of the Gag-Pol polyprotein yielding capsid protein p45 and a Pol-p154 precursor protein. This cleavage is a prerequisite for subsequent processing of Pol-p154 at the remaining sites to release the mature structural and catalytic proteins. Maturation takes place prior to the RT reaction and is required to produce transposition-competent VLPs.

The protein localises to the cytoplasm. The protein resides in the nucleus. It carries out the reaction DNA(n) + a 2'-deoxyribonucleoside 5'-triphosphate = DNA(n+1) + diphosphate. The catalysed reaction is Endonucleolytic cleavage to 5'-phosphomonoester.. Functionally, capsid protein (CA) is the structural component of the virus-like particle (VLP), forming the shell that encapsulates the retrotransposons dimeric RNA genome. The particles are assembled from trimer-clustered units and there are holes in the capsid shells that allow for the diffusion of macromolecules. CA also has nucleocapsid-like chaperone activity, promoting primer tRNA(i)-Met annealing to the multipartite primer-binding site (PBS), dimerization of Ty1 RNA and initiation of reverse transcription. The aspartyl protease (PR) mediates the proteolytic cleavages of the Gag and Gag-Pol polyproteins after assembly of the VLP. Its function is as follows. Reverse transcriptase/ribonuclease H (RT) is a multifunctional enzyme that catalyzes the conversion of the retro-elements RNA genome into dsDNA within the VLP. The enzyme displays a DNA polymerase activity that can copy either DNA or RNA templates, and a ribonuclease H (RNase H) activity that cleaves the RNA strand of RNA-DNA heteroduplexes during plus-strand synthesis and hydrolyzes RNA primers. The conversion leads to a linear dsDNA copy of the retrotransposon that includes long terminal repeats (LTRs) at both ends. In terms of biological role, integrase (IN) targets the VLP to the nucleus, where a subparticle preintegration complex (PIC) containing at least integrase and the newly synthesized dsDNA copy of the retrotransposon must transit the nuclear membrane. Once in the nucleus, integrase performs the integration of the dsDNA into the host genome. In Saccharomyces cerevisiae (strain ATCC 204508 / S288c) (Baker's yeast), this protein is Transposon Ty1-NL2 Gag-Pol polyprotein (TY1B-NL2).